The primary structure comprises 559 residues: Forkhead box protein O6 (559 aa).

Disordered stretches follow at residues 1 to 77 (MAAK…VGPL) and 163 to 183 (SWWM…RRAV). Positions 88–182 (WGNLSYADLI…KTGKTPRRRA (95 aa)) form a DNA-binding region, fork-head. Position 184 is a phosphoserine (Ser-184). Disordered stretches follow at residues 197 to 232 (KASK…KWAA) and 534 to 559 (NFDS…WVPG). Composition is skewed to pro residues over residues 213 to 222 (DSPPGAPVPG) and 539 to 553 (LPPP…PPPN).

Phosphorylation of Ser-184 is be important in regulating the transacriptional activity. In terms of tissue distribution, expressed in brain in areas of the nucleus accumbens, cingulate cortex, parts of the amygdala and in the hippocampus.

It is found in the cytoplasm. The protein localises to the nucleus. In terms of biological role, transcriptional activator. The polypeptide is Forkhead box protein O6 (Foxo6) (Mus musculus (Mouse)).